Consider the following 195-residue polypeptide: ATP synthase subunit b (195 aa).

Residues 28-48 (IFPNVYVLIAHVISLIFLLLL) traverse the membrane as a helical segment.

The protein belongs to the ATPase B chain family. As to quaternary structure, F-type ATPases have 2 components, F(1) - the catalytic core - and F(0) - the membrane proton channel. F(1) has five subunits: alpha(3), beta(3), gamma(1), delta(1), epsilon(1). F(0) has three main subunits: a(1), b(2) and c(10-14). The alpha and beta chains form an alternating ring which encloses part of the gamma chain. F(1) is attached to F(0) by a central stalk formed by the gamma and epsilon chains, while a peripheral stalk is formed by the delta and b chains.

The protein resides in the cell membrane. Its function is as follows. F(1)F(0) ATP synthase produces ATP from ADP in the presence of a proton or sodium gradient. F-type ATPases consist of two structural domains, F(1) containing the extramembraneous catalytic core and F(0) containing the membrane proton channel, linked together by a central stalk and a peripheral stalk. During catalysis, ATP synthesis in the catalytic domain of F(1) is coupled via a rotary mechanism of the central stalk subunits to proton translocation. In terms of biological role, component of the F(0) channel, it forms part of the peripheral stalk, linking F(1) to F(0). This chain is ATP synthase subunit b, found in Malacoplasma penetrans (strain HF-2) (Mycoplasma penetrans).